Here is a 274-residue protein sequence, read N- to C-terminus: Large ribosomal subunit protein uL2 (274 aa).

The tract at residues 221–274 (RGTAMNPVDHPHGGGEGRNFGKHPVTPWGVQTKGKKTRSNKRTDKFIVRRRSKK) is disordered.

The protein belongs to the universal ribosomal protein uL2 family. As to quaternary structure, part of the 50S ribosomal subunit. Forms a bridge to the 30S subunit in the 70S ribosome.

In terms of biological role, one of the primary rRNA binding proteins. Required for association of the 30S and 50S subunits to form the 70S ribosome, for tRNA binding and peptide bond formation. It has been suggested to have peptidyltransferase activity; this is somewhat controversial. Makes several contacts with the 16S rRNA in the 70S ribosome. The sequence is that of Large ribosomal subunit protein uL2 from Yersinia pseudotuberculosis serotype O:1b (strain IP 31758).